Consider the following 37-residue polypeptide: Alpha-conotoxin-like Kn1.2 (37 aa).

The segment covering 1-15 (ESDGAHAKARADKPA) has biased composition (basic and acidic residues). Positions 1–22 (ESDGAHAKARADKPARSATNRQ) are excised as a propeptide. Residues 1-23 (ESDGAHAKARADKPARSATNRQP) form a disordered region. 2 disulfide bridges follow: C25–C31 and C26–C36. At C36 the chain carries Cysteine amide.

This sequence belongs to the conotoxin A superfamily. In terms of tissue distribution, expressed by the venom duct.

Its subcellular location is the secreted. In terms of biological role, alpha-conotoxins act on postsynaptic membranes, they bind to the nicotinic acetylcholine receptors (nAChR) and thus inhibit them. This toxin inhibits high voltage-activated (HVA) calcium channel currents in rat DRG neurons (13% inhibition at 1 uM toxin) probably by activating GABA(B) receptors (GABBR1 and/or GABBR2). The polypeptide is Alpha-conotoxin-like Kn1.2 (Conus kinoshitai (Kinoshita's cone)).